The chain runs to 421 residues: CinA-like protein (421 aa).

It belongs to the CinA family.

In Synechococcus sp. (strain ATCC 27144 / PCC 6301 / SAUG 1402/1) (Anacystis nidulans), this protein is CinA-like protein.